The following is a 68-amino-acid chain: Large ribosomal subunit protein bL32 (68 aa).

The tract at residues 1 to 21 is disordered; it reads MAVQQNKVSKSRRNNRRAHDS.

The protein belongs to the bacterial ribosomal protein bL32 family.

The sequence is that of Large ribosomal subunit protein bL32 from Roseobacter denitrificans (strain ATCC 33942 / OCh 114) (Erythrobacter sp. (strain OCh 114)).